A 683-amino-acid chain; its full sequence is DNA ligase (683 aa).

NAD(+)-binding positions include 29–33, 79–80, and Glu109; these read DAEFD and SL. Lys111 functions as the N6-AMP-lysine intermediate in the catalytic mechanism. NAD(+)-binding residues include Arg132, Glu172, Lys288, and Lys312. Residues Cys406, Cys409, Cys425, and Cys431 each contribute to the Zn(2+) site. Residues 595–683 form the BRCT domain; it reads SVPRTLAGVT…GPPAEAGEPT (89 aa).

Belongs to the NAD-dependent DNA ligase family. LigA subfamily. The cofactor is Mg(2+). Mn(2+) serves as cofactor.

The catalysed reaction is NAD(+) + (deoxyribonucleotide)n-3'-hydroxyl + 5'-phospho-(deoxyribonucleotide)m = (deoxyribonucleotide)n+m + AMP + beta-nicotinamide D-nucleotide.. DNA ligase that catalyzes the formation of phosphodiester linkages between 5'-phosphoryl and 3'-hydroxyl groups in double-stranded DNA using NAD as a coenzyme and as the energy source for the reaction. It is essential for DNA replication and repair of damaged DNA. The sequence is that of DNA ligase from Mycobacterium ulcerans (strain Agy99).